We begin with the raw amino-acid sequence, 434 residues long: Histidinol dehydrogenase (434 aa).

The substrate site is built by S242, Q264, and H267. 2 residues coordinate Zn(2+): Q264 and H267. Catalysis depends on proton acceptor residues E332 and H333. H333, D366, E420, and H425 together coordinate substrate. D366 contacts Zn(2+). H425 serves as a coordination point for Zn(2+).

This sequence belongs to the histidinol dehydrogenase family. The cofactor is Zn(2+).

The catalysed reaction is L-histidinol + 2 NAD(+) + H2O = L-histidine + 2 NADH + 3 H(+). It participates in amino-acid biosynthesis; L-histidine biosynthesis; L-histidine from 5-phospho-alpha-D-ribose 1-diphosphate: step 9/9. Its function is as follows. Catalyzes the sequential NAD-dependent oxidations of L-histidinol to L-histidinaldehyde and then to L-histidine. The protein is Histidinol dehydrogenase of Desulfotalea psychrophila (strain LSv54 / DSM 12343).